A 190-amino-acid chain; its full sequence is dTTP/UTP pyrophosphatase (190 aa).

Asp-71 acts as the Proton acceptor in catalysis.

The protein belongs to the Maf family. YhdE subfamily. The cofactor is a divalent metal cation.

Its subcellular location is the cytoplasm. The catalysed reaction is dTTP + H2O = dTMP + diphosphate + H(+). It catalyses the reaction UTP + H2O = UMP + diphosphate + H(+). In terms of biological role, nucleoside triphosphate pyrophosphatase that hydrolyzes dTTP and UTP. May have a dual role in cell division arrest and in preventing the incorporation of modified nucleotides into cellular nucleic acids. This chain is dTTP/UTP pyrophosphatase, found in Xanthomonas axonopodis pv. citri (strain 306).